We begin with the raw amino-acid sequence, 265 residues long: 3-methyl-2-oxobutanoate hydroxymethyltransferase (265 aa).

Mg(2+) contacts are provided by aspartate 45 and aspartate 84. 3-methyl-2-oxobutanoate is bound by residues aspartate 45 to serine 46, aspartate 84, and lysine 112. Glutamate 114 is a Mg(2+) binding site. Glutamate 182 functions as the Proton acceptor in the catalytic mechanism.

The protein belongs to the PanB family. In terms of assembly, homodecamer; pentamer of dimers. Mg(2+) serves as cofactor.

Its subcellular location is the cytoplasm. The catalysed reaction is 3-methyl-2-oxobutanoate + (6R)-5,10-methylene-5,6,7,8-tetrahydrofolate + H2O = 2-dehydropantoate + (6S)-5,6,7,8-tetrahydrofolate. It participates in cofactor biosynthesis; (R)-pantothenate biosynthesis; (R)-pantoate from 3-methyl-2-oxobutanoate: step 1/2. In terms of biological role, catalyzes the reversible reaction in which hydroxymethyl group from 5,10-methylenetetrahydrofolate is transferred onto alpha-ketoisovalerate to form ketopantoate. The sequence is that of 3-methyl-2-oxobutanoate hydroxymethyltransferase from Baumannia cicadellinicola subsp. Homalodisca coagulata.